We begin with the raw amino-acid sequence, 466 residues long: Ribosome biogenesis protein YTM1 (466 aa).

The tract at residues 8–95 (IKINFFTNEE…EASLNLEYTR (88 aa)) is ubiquitin-like (UBL) domain. Residues 105–466 (SFNNDDWISS…QINKGSDITK (362 aa)) are sufficient for interaction with ERB1 and association with 66S pre-ribosomes. WD repeat units follow at residues 120-159 (PLSA…EKQY), 161-199 (GHSG…NIED), 214-253 (GHKA…MTTI), 291-331 (GHSQ…CVDT), 333-372 (TTGY…TTTE), 381-421 (GHTN…SLYT), and 431-466 (KGQD…DITK).

The protein belongs to the WD repeat WDR12/YTM1 family. In terms of assembly, component of the NOP7 complex, composed of ERB1, NOP7 and YTM1. The complex is held together by ERB1, which interacts with NOP7 via its N-terminal domain and with YTM1 via a high-affinity interaction between the seven-bladed beta-propeller domains of the 2 proteins. The NOP7 complex associates with the 66S pre-ribosome. Interacts (via UBL domain) with MDN1 (via VWFA/MIDAS domain).

It localises to the nucleus. It is found in the nucleolus. Its subcellular location is the nucleoplasm. Functionally, component of the NOP7 complex, which is required for maturation of the 25S and 5.8S ribosomal RNAs and formation of the 60S ribosome. This is Ribosome biogenesis protein YTM1 from Debaryomyces hansenii (strain ATCC 36239 / CBS 767 / BCRC 21394 / JCM 1990 / NBRC 0083 / IGC 2968) (Yeast).